A 391-amino-acid polypeptide reads, in one-letter code: Matrix metalloproteinase-23 (391 aa).

Topologically, residues methionine 1 to arginine 18 are cytoplasmic. A propeptide spanning residues methionine 1–arginine 79 is cleaved from the precursor. Residues tryptophan 19–leucine 39 form a helical membrane-spanning segment. Residues glycine 40–asparagine 391 are Lumenal-facing. 2 N-linked (GlcNAc...) asparagine glycosylation sites follow: asparagine 93 and asparagine 149. Residue histidine 212 coordinates Zn(2+). Residue glutamate 213 is part of the active site. Zn(2+) is bound by residues histidine 216 and histidine 222. An N-linked (GlcNAc...) asparagine glycan is attached at asparagine 233. Residues cysteine 256–cysteine 290 form the ShKT domain. Intrachain disulfides connect cysteine 256–cysteine 290, cysteine 263–cysteine 283, and cysteine 272–cysteine 287. The Ig-like C2-type domain maps to valine 298–tyrosine 383. Asparagine 317 carries N-linked (GlcNAc...) asparagine glycosylation. Cysteines 322 and 371 form a disulfide.

Belongs to the peptidase M10A family. Zn(2+) serves as cofactor. N-glycosylated. In terms of processing, proteolytic cleavage might yield an active form. Expressed at relatively high level in heart, lung and spleen. Not detected in brain, liver, skeletal muscle, kidney and testis.

It localises to the endoplasmic reticulum membrane. The protein localises to the membrane. Its activity is regulated as follows. Inhibited by TIMP2. Its function is as follows. Protease. May regulate the surface expression of some potassium channels by retaining them in the endoplasmic reticulum. The protein is Matrix metalloproteinase-23 (Mmp23) of Mus musculus (Mouse).